The chain runs to 59 residues: Chromatin protein Cren7 (59 aa).

It belongs to the Cren7 family. In terms of assembly, monomer. In terms of processing, methylated at multiple sites, to varying extents.

It localises to the chromosome. The protein resides in the cytoplasm. Functionally, a chromatin protein, binds double-stranded DNA without sequence specificity. Constrains negative DNA supercoils. The protein is Chromatin protein Cren7 of Pyrobaculum arsenaticum (strain DSM 13514 / JCM 11321 / PZ6).